The chain runs to 526 residues: Adenylosuccinate synthetase (526 aa).

GTP-binding positions include 102 to 108 (GDEGKGK) and 130 to 132 (GHT). The active-site Proton acceptor is the D103. D103 and G130 together coordinate Mg(2+). IMP contacts are provided by residues 103–106 (DEGK), 128–131 (NAGH), T219, R233, N310, T325, and R392. H131 functions as the Proton donor in the catalytic mechanism. A substrate-binding site is contributed by 388 to 394 (TTTGRTR). GTP-binding positions include R394, 420 to 422 (KVD), and 502 to 504 (GVG).

Belongs to the adenylosuccinate synthetase family. In terms of assembly, homodimer. The cofactor is Mg(2+).

The protein localises to the cytoplasm. It carries out the reaction IMP + L-aspartate + GTP = N(6)-(1,2-dicarboxyethyl)-AMP + GDP + phosphate + 2 H(+). Its pathway is purine metabolism; AMP biosynthesis via de novo pathway; AMP from IMP: step 1/2. Functionally, plays an important role in the de novo pathway and in the salvage pathway of purine nucleotide biosynthesis. Catalyzes the first committed step in the biosynthesis of AMP from IMP. The protein is Adenylosuccinate synthetase of Phaeodactylum tricornutum (strain CCAP 1055/1).